The chain runs to 156 residues: 6,7-dimethyl-8-ribityllumazine synthase (156 aa).

5-amino-6-(D-ribitylamino)uracil is bound by residues Phe-22, Ala-57–Glu-59, and Thr-81–Ile-83. Gly-86 to Thr-87 lines the (2S)-2-hydroxy-3-oxobutyl phosphate pocket. The active-site Proton donor is His-89. Residue Phe-114 coordinates 5-amino-6-(D-ribitylamino)uracil. Arg-128 provides a ligand contact to (2S)-2-hydroxy-3-oxobutyl phosphate.

This sequence belongs to the DMRL synthase family. As to quaternary structure, forms an icosahedral capsid composed of 60 subunits, arranged as a dodecamer of pentamers.

The enzyme catalyses (2S)-2-hydroxy-3-oxobutyl phosphate + 5-amino-6-(D-ribitylamino)uracil = 6,7-dimethyl-8-(1-D-ribityl)lumazine + phosphate + 2 H2O + H(+). Its pathway is cofactor biosynthesis; riboflavin biosynthesis; riboflavin from 2-hydroxy-3-oxobutyl phosphate and 5-amino-6-(D-ribitylamino)uracil: step 1/2. Functionally, catalyzes the formation of 6,7-dimethyl-8-ribityllumazine by condensation of 5-amino-6-(D-ribitylamino)uracil with 3,4-dihydroxy-2-butanone 4-phosphate. This is the penultimate step in the biosynthesis of riboflavin. The sequence is that of 6,7-dimethyl-8-ribityllumazine synthase from Erwinia tasmaniensis (strain DSM 17950 / CFBP 7177 / CIP 109463 / NCPPB 4357 / Et1/99).